A 445-amino-acid chain; its full sequence is Phosphoglucosamine mutase 1 (445 aa).

The Phosphoserine intermediate role is filled by S102. The Mg(2+) site is built by S102, D241, D243, and D245. At S102 the chain carries Phosphoserine.

This sequence belongs to the phosphohexose mutase family. Requires Mg(2+) as cofactor. Post-translationally, activated by phosphorylation.

The catalysed reaction is alpha-D-glucosamine 1-phosphate = D-glucosamine 6-phosphate. Functionally, catalyzes the conversion of glucosamine-6-phosphate to glucosamine-1-phosphate. The chain is Phosphoglucosamine mutase 1 from Shewanella amazonensis (strain ATCC BAA-1098 / SB2B).